The primary structure comprises 222 residues: N-(5'-phosphoribosyl)anthranilate isomerase (222 aa).

It belongs to the TrpF family.

It carries out the reaction N-(5-phospho-beta-D-ribosyl)anthranilate = 1-(2-carboxyphenylamino)-1-deoxy-D-ribulose 5-phosphate. Its pathway is amino-acid biosynthesis; L-tryptophan biosynthesis; L-tryptophan from chorismate: step 3/5. This Xanthomonas euvesicatoria pv. vesicatoria (strain 85-10) (Xanthomonas campestris pv. vesicatoria) protein is N-(5'-phosphoribosyl)anthranilate isomerase.